The sequence spans 668 residues: MAP kinase kinase PBS2 (668 aa).

Residues 1–15 (MEDKFANLSLHEKTG) show a composition bias toward basic and acidic residues. Disordered stretches follow at residues 1 to 43 (MEDK…SSHY), 61 to 120 (RALK…ASSK), and 181 to 313 (NPNR…GSSG). 3 stretches are compositionally biased toward polar residues: residues 16–43 (KSSI…SSHY), 68–91 (SVGS…QQIV), and 104–120 (SKVS…ASSK). The residue at position 68 (Ser68) is a Phosphoserine. Over residues 239–250 (AQQPQQFAPSPS) the composition is skewed to low complexity. Ser269 carries the phosphoserine modification. Positions 270 to 300 (NPGSLINGVQSTSTSSSTEGPHDTVGTTPRT) are enriched in polar residues. Low complexity predominate over residues 301–310 (GNSNNSSNSG). The Protein kinase domain maps to 360 to 623 (LEFLDELGHG…YAALTEHPWL (264 aa)). Residues 366–374 (LGHGNYGNV) and Lys389 contribute to the ATP site. Asp485 serves as the catalytic Proton acceptor. Ser514 carries the post-translational modification Phosphoserine. Thr518 is subject to Phosphothreonine.

It belongs to the protein kinase superfamily. STE Ser/Thr protein kinase family. MAP kinase kinase subfamily. Interacts with NBP2, PTC1, SHO1 and STE11. In terms of processing, activated by phosphorylation by SSK2 or SSK22. Ser/Thr phosphorylation is also necessary for SHO1-mediated activation.

It localises to the cytoplasm. The catalysed reaction is L-seryl-[protein] + ATP = O-phospho-L-seryl-[protein] + ADP + H(+). It carries out the reaction L-threonyl-[protein] + ATP = O-phospho-L-threonyl-[protein] + ADP + H(+). It catalyses the reaction L-tyrosyl-[protein] + ATP = O-phospho-L-tyrosyl-[protein] + ADP + H(+). Kinase involved in a signal transduction pathway that is activated by changes in the osmolarity of the extracellular environment. Activates the MAP kinase HOG1 by concomitant phosphorylation at 'Thr-174' and 'Tyr-176'. This Saccharomyces cerevisiae (strain ATCC 204508 / S288c) (Baker's yeast) protein is MAP kinase kinase PBS2 (PBS2).